An 842-amino-acid chain; its full sequence is Protein P (842 aa).

The segment at 1–177 (MPLSYQHFRR…FCGSPYSWEQ (177 aa)) is terminal protein domain (TP). The spacer stretch occupies residues 178–345 (ELHHGAFLDG…YCLTHLVNLL (168 aa)). Positions 205-271 (SRPPVGSSIQ…RHAKNIASRP (67 aa)) are disordered. Positions 223–239 (GPQSQQRPLDGSQQGRS) are enriched in polar residues. Positions 346–689 (EDWGPCTEHG…YLNLYPVARQ (344 aa)) are polymerase/reverse transcriptase domain (RT). The region spanning 356-599 (KHHIRIPRTP…YSLNFMGYVI (244 aa)) is the Reverse transcriptase domain. The Mg(2+) site is built by aspartate 428, aspartate 550, and aspartate 551.

Belongs to the hepadnaviridae P protein family.

It catalyses the reaction DNA(n) + a 2'-deoxyribonucleoside 5'-triphosphate = DNA(n+1) + diphosphate. The enzyme catalyses Endonucleolytic cleavage to 5'-phosphomonoester.. With respect to regulation, activated by host HSP70 and HSP40 in vitro to be able to bind the epsilon loop of the pgRNA. Because deletion of the RNase H region renders the protein partly chaperone-independent, the chaperones may be needed indirectly to relieve occlusion of the RNA-binding site by this domain. Inhibited by several reverse-transcriptase inhibitors: Lamivudine, Adefovir and Entecavir. Its function is as follows. Multifunctional enzyme that converts the viral RNA genome into dsDNA in viral cytoplasmic capsids. This enzyme displays a DNA polymerase activity that can copy either DNA or RNA templates, and a ribonuclease H (RNase H) activity that cleaves the RNA strand of RNA-DNA heteroduplexes in a partially processive 3'- to 5'-endonucleasic mode. Neo-synthesized pregenomic RNA (pgRNA) are encapsidated together with the P protein, and reverse-transcribed inside the nucleocapsid. Initiation of reverse-transcription occurs first by binding the epsilon loop on the pgRNA genome, and is initiated by protein priming, thereby the 5'-end of (-)DNA is covalently linked to P protein. Partial (+)DNA is synthesized from the (-)DNA template and generates the relaxed circular DNA (RC-DNA) genome. After budding and infection, the RC-DNA migrates in the nucleus, and is converted into a plasmid-like covalently closed circular DNA (cccDNA). The activity of P protein does not seem to be necessary for cccDNA generation, and is presumably released from (+)DNA by host nuclear DNA repair machinery. The chain is Protein P from Hepatitis B virus genotype E subtype ayw4 (isolate Kou) (HBV-E).